A 148-amino-acid polypeptide reads, in one-letter code: Large ribosomal subunit protein uL15 (148 aa).

The interval 1 to 47 (MTKLEDLRPTPGSVKPRKRVGRGIGSGHGKTSGRGHKGQKSRGSGKV) is disordered. Residues 31–45 (TSGRGHKGQKSRGSG) are compositionally biased toward basic residues.

The protein belongs to the universal ribosomal protein uL15 family. In terms of assembly, part of the 50S ribosomal subunit.

Binds to the 23S rRNA. The sequence is that of Large ribosomal subunit protein uL15 from Pseudothermotoga lettingae (strain ATCC BAA-301 / DSM 14385 / NBRC 107922 / TMO) (Thermotoga lettingae).